A 30-amino-acid chain; its full sequence is Hainantoxin F6-34.84 (30 aa).

2 disulfide bridges follow: Cys2-Cys15 and Cys9-Cys24.

The protein belongs to the AVIT (prokineticin) family. Expressed by the venom gland.

The protein localises to the secreted. The protein is Hainantoxin F6-34.84 of Cyriopagopus hainanus (Chinese bird spider).